Consider the following 151-residue polypeptide: Phosphoribosyl-AMP cyclohydrolase (151 aa).

Residue Asp94 coordinates Mg(2+). Residue Cys95 coordinates Zn(2+). Mg(2+)-binding residues include Asp96 and Asp98. Cys112 and Cys119 together coordinate Zn(2+).

Belongs to the PRA-CH family. As to quaternary structure, homodimer. Mg(2+) is required as a cofactor. Zn(2+) serves as cofactor.

It localises to the cytoplasm. The enzyme catalyses 1-(5-phospho-beta-D-ribosyl)-5'-AMP + H2O = 1-(5-phospho-beta-D-ribosyl)-5-[(5-phospho-beta-D-ribosylamino)methylideneamino]imidazole-4-carboxamide. It functions in the pathway amino-acid biosynthesis; L-histidine biosynthesis; L-histidine from 5-phospho-alpha-D-ribose 1-diphosphate: step 3/9. Catalyzes the hydrolysis of the adenine ring of phosphoribosyl-AMP. This is Phosphoribosyl-AMP cyclohydrolase from Rhodopseudomonas palustris (strain TIE-1).